We begin with the raw amino-acid sequence, 317 residues long: NF-kappa-B inhibitor alpha (317 aa).

The interval Met-1 to Asp-39 is disordered. The span at Gly-15–Asp-39 shows a compositional bias: basic and acidic residues. Residue Lys-21 forms a Glycyl lysine isopeptide (Lys-Gly) (interchain with G-Cter in SUMO); alternate linkage. Residue Lys-21 forms a Glycyl lysine isopeptide (Lys-Gly) (interchain with G-Cter in ubiquitin); alternate linkage. Residue Lys-22 forms a Glycyl lysine isopeptide (Lys-Gly) (interchain with G-Cter in ubiquitin) linkage. The Destruction motif motif lies at His-30–Ser-36. Ser-32 carries the phosphoserine; by IKKA and IKKE modification. Ser-36 carries the post-translational modification Phosphoserine; by IKKA, IKKB, IKKE and TBK1. Position 42 is a phosphotyrosine; by Tyr-kinases (Tyr-42). A Nuclear export signal motif is present at residues Met-45–Leu-54. ANK repeat units lie at residues Asp-73–Phe-103, Leu-110–Leu-139, Arg-143–Leu-172, Asn-182–Ala-211, and Asn-216–Arg-245. Residues Leu-110–Ile-120 carry the Nuclear import signal motif. (3S)-3-hydroxyasparagine; by HIF1AN; partial is present on residues Asn-210 and Asn-244. A phosphoserine; by CK2 mark is found at Ser-283 and Ser-288. A Phosphothreonine; by CK2 modification is found at Thr-291. Phosphoserine; by CK2 is present on Ser-293. Thr-299 bears the Phosphothreonine; by CK2 mark.

Belongs to the NF-kappa-B inhibitor family. In terms of assembly, interacts with RELA; the interaction requires the nuclear import signal. Part of a 70-90 kDa complex at least consisting of CHUK, IKBKB, NFKBIA, RELA, ELP1 and MAP3K14. Interacts with NKIRAS1 and NKIRAS2. Interacts with isoform 1 and isoform 2 of RWDD3; the interaction enhances sumoylation. Interacts with PRMT2. Interacts with PRKACA in platelets; this interaction is disrupted by thrombin and collagen. Interacts with MEFV. Interacts with DDRGK1; positively regulates NFKBIA phosphorylation and degradation. Interacts with HNRNPA2B1; the interaction may be mediated by the RRM2 domain of HNRNPA2B1, and HNRNPA2B1 may interact simultaneously with FAM76B and either NFKBIA or NFKBIE to form a complex. As to quaternary structure, (Microbial infection) Interacts with HBV protein X. Phosphorylated at Ser-32 and Ser-36 by IKKA/CHUK and IKKB/IKBKB; disables inhibition of NF-kappa-B DNA-binding activity. Phosphorylation at positions 32 and 36 is prerequisite to recognition by the SCF(FBXW11) and SCF(BTRC) complexes, leading to polyubiquitination and subsequent degradation. Phosphorylated at Ser-32 in response to FK506 treatment: phosphorylation is independent of IKKA/CHUK and IKKB/IKBKB and promotes NFKBIA degradation, followed by NF-kappa-B activation. Phosphorylated at Tyr-42: its effect is however unclear. According to a report, phosphorylation at Tyr-42 activates NF-kappa-B without triggering proteolytic degradation of NFKBIA. According to another publication, phosphorylation at Tyr-42 inhibits NF-kappa-B activity by preventing phosphorylation at Ser-32 and Ser-36 and subsequent ubiquitination and degradation. In terms of processing, polyubiquitinated at Lys-21 and/or Lys-22 following phosphorylation at Ser-32 and Ser-36. Monoubiquitinated at Lys-21 and/or Lys-22 by UBE2D3. Ubiquitin chain elongation is then performed by CDC34 in cooperation with the SCF(FBXW11) E3 ligase complex, building ubiquitin chains from the UBE2D3-primed NFKBIA-linked ubiquitin. The resulting polyubiquitination leads to protein degradation. Also ubiquitinated by the SCF(BTRC) complex following stimulus-dependent phosphorylation at Ser-32 and Ser-36. Deubiquitinated by USP38, leading to NF-kappa-B inhibition. Post-translationally, sumoylated; sumoylation requires the presence of the nuclear import signal. Sumoylation blocks ubiquitination and proteasome-mediated degradation of the protein thereby increasing the protein stability. Hydroxylated by HIF1AN. In terms of processing, (Microbial infection) Deubiquitinated by porcine reproductive and respiratory syndrome virus Nsp2 protein, which thereby interferes with NFKBIA degradation and impairs subsequent NF-kappa-B activation.

It localises to the cytoplasm. It is found in the nucleus. Functionally, inhibits the activity of dimeric NF-kappa-B/REL complexes by trapping REL (RELA/p65 and NFKB1/p50) dimers in the cytoplasm by masking their nuclear localization signals. On cellular stimulation by immune and pro-inflammatory responses, becomes phosphorylated promoting ubiquitination and degradation, enabling the dimeric RELA to translocate to the nucleus and activate transcription. The sequence is that of NF-kappa-B inhibitor alpha (NFKBIA) from Homo sapiens (Human).